Consider the following 658-residue polypeptide: tRNA 5-methylaminomethyl-2-thiouridine biosynthesis bifunctional protein MnmC (658 aa).

Residues 1–236 (MIPELPHAQL…KWEVLRGEFL (236 aa)) are tRNA (mnm(5)s(2)U34)-methyltransferase. The interval 265–658 (IGGGLAGCAS…ALRRLIRGKA (394 aa)) is FAD-dependent cmnm(5)s(2)U34 oxidoreductase.

The protein in the N-terminal section; belongs to the methyltransferase superfamily. tRNA (mnm(5)s(2)U34)-methyltransferase family. It in the C-terminal section; belongs to the DAO family. FAD serves as cofactor.

It is found in the cytoplasm. It carries out the reaction 5-aminomethyl-2-thiouridine(34) in tRNA + S-adenosyl-L-methionine = 5-methylaminomethyl-2-thiouridine(34) in tRNA + S-adenosyl-L-homocysteine + H(+). Its function is as follows. Catalyzes the last two steps in the biosynthesis of 5-methylaminomethyl-2-thiouridine (mnm(5)s(2)U) at the wobble position (U34) in tRNA. Catalyzes the FAD-dependent demodification of cmnm(5)s(2)U34 to nm(5)s(2)U34, followed by the transfer of a methyl group from S-adenosyl-L-methionine to nm(5)s(2)U34, to form mnm(5)s(2)U34. The sequence is that of tRNA 5-methylaminomethyl-2-thiouridine biosynthesis bifunctional protein MnmC from Pseudomonas fluorescens (strain ATCC BAA-477 / NRRL B-23932 / Pf-5).